We begin with the raw amino-acid sequence, 405 residues long: Prenyltransferase phqA (405 aa).

Dimethylallyl diphosphate contacts are provided by tyrosine 195, lysine 262, and glutamine 332.

It belongs to the tryptophan dimethylallyltransferase family.

It functions in the pathway alkaloid biosynthesis. Functionally, prenyltransferase; part of the gene cluster that mediates the biosynthesis of paraherquamide, a fungal indole alkaloid that belongs to a family of natural products containing a characteristic bicyclo[2.2.2]diazaoctane core. The first steps in the biosynthesis of paraherquamide is the production of the beta-methyl-proline precursor from L-isoleucine. They require oxidation of a terminally hydroxylated L-isoleucine to the corresponding aldehyde by enzymes which have still to be identified. Spontaneous cyclization and dehydration would yield the 4-methyl pyrolline-5-carboxylic acid, which is then reduced by the pyrroline-5-carboxylate reductase phqD leading to the beta-methyl-proline precursor. The next step of paraherquamide biosynthesis involves coupling of beta-methyl-proline and L-tryptophan by the bimodular NRPS phqB, to produce a monooxopiperazine intermediate. The reductase (R) domain of phqB utilizes NADPH for hydride transfer to reduce the thioester bond of the T domain-tethered linear dipeptide to a hemithioaminal intermediate, which spontaneously cleaves the C-S bond to release the aldehyde product. This compound undergoes spontaneous cyclization and dehydration to give a dienamine which is reverse prenylated at C-2 by the reverse prenyltransferase phqJ. The other prenyltransferase present in the cluster, phqI may be a redundant gene in the pathway. During biosynthetic assembly, the key step to produce the polycyclic core is catalyzed by the bifunctional reductase and intramolecular [4+2] Diels-Alderase, phqE, resulting in formation of the [2.2.2] diazaoctane intermediate preparaherquamide. Following formation of preparaherquamide, an indole 2,3-epoxidation-initiated pinacol-like rearrangement is catalyzed by the phqK FAD-dependent monooxygenase. The prenyltransferase phqA, the cytochrome P450 monooxygenase phqL, and the FAD-linked oxidoreductase phqH (or the cytochrome P450 monooxygenase phqM), are proposed to be involved in the formation of the pyran ring. The FAD-dependent monooxygenase phqK is likely responsible for generation of the spiro-oxindole, and the N-methylation is likely mediated by the phqN methyltransferase leading to the isolable natural product paraherquamide F. However, the order of these biosynthetic steps has still to be determined. In late-stage paraherquamide biosynthesis, the third P450 monooxygenase, phqO, is probably responsible for the C-14 hydroxylation, transforming paraherquamide F to paraherquamide G, and paraherquamide E to the final product paraherquamide A. The expansion from the 6-membered ring pyran (in paraherquamides F and G) to the 7-membered dioxepin ring (in paraherquamides A and E) represents a poorly understood but intriguing process that probably involves the 2-oxoglutarate-dependent dioxygenase phqC. Finally, the remaining members of the paraherquamide cluster, including phqI as well as phqM (or phqH), do not have a clearly prescribed role and appear to be redundant. This chain is Prenyltransferase phqA, found in Penicillium fellutanum.